Consider the following 309-residue polypeptide: Ribonuclease Z (309 aa).

Zn(2+) is bound by residues His-63, His-65, Asp-67, His-68, His-145, Asp-216, and His-274. Asp-67 acts as the Proton acceptor in catalysis.

This sequence belongs to the RNase Z family. As to quaternary structure, homodimer. The cofactor is Zn(2+).

The catalysed reaction is Endonucleolytic cleavage of RNA, removing extra 3' nucleotides from tRNA precursor, generating 3' termini of tRNAs. A 3'-hydroxy group is left at the tRNA terminus and a 5'-phosphoryl group is left at the trailer molecule.. In terms of biological role, zinc phosphodiesterase, which displays some tRNA 3'-processing endonuclease activity. Probably involved in tRNA maturation, by removing a 3'-trailer from precursor tRNA. The chain is Ribonuclease Z from Streptococcus pneumoniae (strain 70585).